The following is a 261-amino-acid chain: Phosphatidylglycerol--prolipoprotein diacylglyceryl transferase (261 aa).

Transmembrane regions (helical) follow at residues 17 to 37, 60 to 80, 92 to 112, and 121 to 141; these read FGIH…LWLG, ALFY…ALFY, ILFL…VMVA, and GLTF…GLGA. Position 143 (Arg-143) interacts with a 1,2-diacyl-sn-glycero-3-phospho-(1'-sn-glycerol). Helical transmembrane passes span 175 to 195, 203 to 223, and 237 to 257; these read PSQL…LWWY, GSVS…VEFT, and LSMG…LLIV.

The protein belongs to the Lgt family.

The protein localises to the cell inner membrane. The enzyme catalyses L-cysteinyl-[prolipoprotein] + a 1,2-diacyl-sn-glycero-3-phospho-(1'-sn-glycerol) = an S-1,2-diacyl-sn-glyceryl-L-cysteinyl-[prolipoprotein] + sn-glycerol 1-phosphate + H(+). The protein operates within protein modification; lipoprotein biosynthesis (diacylglyceryl transfer). Catalyzes the transfer of the diacylglyceryl group from phosphatidylglycerol to the sulfhydryl group of the N-terminal cysteine of a prolipoprotein, the first step in the formation of mature lipoproteins. This is Phosphatidylglycerol--prolipoprotein diacylglyceryl transferase from Methylobacillus flagellatus (strain ATCC 51484 / DSM 6875 / VKM B-1610 / KT).